Consider the following 523-residue polypeptide: Calcium-dependent protein kinase 1 (523 aa).

Residues 1 to 36 (MGCNQSKSANDVRGNKVNHVNSKKKNNKREDTNDGE) form a disordered region. The N-myristoyl glycine moiety is linked to residue Gly-2. A lipid anchor (S-palmitoyl cysteine) is attached at Cys-3. The Protein kinase domain occupies 57–324 (YFKVRKLGSG…AEEALNSRWI (268 aa)). ATP-binding positions include 63-71 (LGSGAYGEV), Lys-86, and Lys-90. A Phosphoserine modification is found at Ser-65. Position 117 is a phosphoserine (Ser-117). Asp-190 acts as the Proton acceptor in catalysis. Residues Ser-216 and Ser-219 each carry the phosphoserine modification. At Thr-230 the chain carries Phosphothreonine. The residue at position 334 (Ser-334) is a Phosphoserine. The J domain autoinhibitory motif motif lies at 345–352 (NMRKFEGS). The interval 345-363 (NMRKFEGSQKLAQAAILFI) is j domain. Residues 353–363 (QKLAQAAILFI) carry the J domain interacts with the EF-hand domains motif. EF-hand domains follow at residues 371 to 406 (EERK…LRNF), 415 to 450 (NVEE…KQIL), 451 to 486 (FSEE…TSIS), and 487 to 520 (EKTW…ICDH). Residues Asp-384, Asn-386, Asp-388, Gln-390, Glu-395, Asp-428, Asp-430, Asn-432, Tyr-434, Glu-439, Asp-464, Asp-466, Ser-468, Lys-470, Glu-475, Asp-498, Asn-500, Asp-502, Met-504, and Glu-509 each contribute to the Ca(2+) site.

It belongs to the protein kinase superfamily. Ser/Thr protein kinase family. CDPK subfamily. In terms of assembly, monomer. The cofactor is Mg(2+). Myristoylated. Myristoylation and palmitoylation are required for the localization to the parasitophorous vacuole membrane. In terms of processing, palmitoylated. Palmitoylation increases in merozoites in response to low level of extracellular K(+) in the host blood. Myristoylation and palmitoylation are required for the localization to the parasitophorous vacuole membrane. Post-translationally, phosphorylation at Thr-230 may regulate CDPK1 kinase activity. Phosphorylation increases in response to an increase in intracellular Ca(2+) levels. Autophosphorylated in vitro. Autophosphorylation does not affect membrane localization in vitro.

Its subcellular location is the membrane. It localises to the cell membrane. The protein resides in the parasitophorous vacuole membrane. It is found in the cytoplasm. The protein localises to the cell projection. Its subcellular location is the cilium. It localises to the flagellum. The protein resides in the host cell membrane. It carries out the reaction L-seryl-[protein] + ATP = O-phospho-L-seryl-[protein] + ADP + H(+). The enzyme catalyses L-threonyl-[protein] + ATP = O-phospho-L-threonyl-[protein] + ADP + H(+). With respect to regulation, activated by calcium. Upon calcium binding to the EF-hand domains, the C-terminus of the junction domain (J domain) undergoes a conformational change which results in the dissociation of the pseudo-substrate inhibitory motif from the catalytic domain. This, in turn may facilitate the autophosphorylation of the activation loop at Thr-230, which leads to the kinase activation. Its function is as follows. Calcium-dependent protein kinase which acts as a sensor and effector of intracellular Ca(2+) levels probably in part downstream of cGMP-activated PKG kinase. During the liver stage, involved in sporozoite motility and thus in sporozoite invasion of host hepatocytes, probably together with CDPK4 and CDPK5. In the mosquito midgut and during the last stage of male gamete exflagellation, may play a role in the rupture of the host erythrocyte membrane. In the mosquito midgut, required for the differentiation of the zygote into the ookinete by promoting the translational activation of a subset of repressed mRNAs; these mRNAs are kept repressed in the zygote by the DOZI- or CITH-containing mRNP complexes. Dispensable during the asexual blood stage. The protein is Calcium-dependent protein kinase 1 of Plasmodium berghei (strain Anka).